Here is a 176-residue protein sequence, read N- to C-terminus: MAITGIFFGSDTGNTENIAKMIQKQLGKDVADVHDIAKSSKEDLEAYDILLLGIPTWYYGEAQCDWDDFFPTLEEIDFNGKLVALFGCGDQEDYAEYFCDALGTIRDIIEPRGATIVGHWPTAGYHFEASKGLADDDHFVGLAIDEDRQPELTAERVEKWVKQISEELHLDEILNA.

The Flavodoxin-like domain occupies 4–165 (TGIFFGSDTG…RVEKWVKQIS (162 aa)).

It belongs to the flavodoxin family. FMN serves as cofactor.

Low-potential electron donor to a number of redox enzymes (Potential). Involved in the reactivation of inactive cob(II)alamin in methionine synthase. The protein is Flavodoxin 1 (fldA) of Escherichia coli O157:H7.